We begin with the raw amino-acid sequence, 397 residues long: Argininosuccinate synthase (397 aa).

7–15 (AFSGGLDTT) serves as a coordination point for ATP. L-citrulline is bound at residue tyrosine 84. An ATP-binding site is contributed by glycine 114. Residues threonine 116, asparagine 120, and aspartate 121 each contribute to the L-aspartate site. Asparagine 120 lines the L-citrulline pocket. 5 residues coordinate L-citrulline: arginine 124, serine 170, serine 179, glutamate 254, and tyrosine 266.

It belongs to the argininosuccinate synthase family. Type 1 subfamily. In terms of assembly, homotetramer.

The protein resides in the cytoplasm. The catalysed reaction is L-citrulline + L-aspartate + ATP = 2-(N(omega)-L-arginino)succinate + AMP + diphosphate + H(+). It functions in the pathway amino-acid biosynthesis; L-arginine biosynthesis; L-arginine from L-ornithine and carbamoyl phosphate: step 2/3. This Haloquadratum walsbyi (strain DSM 16790 / HBSQ001) protein is Argininosuccinate synthase.